The sequence spans 887 residues: UPF0182 protein CTC_00086 (887 aa).

7 helical membrane-spanning segments follow: residues 9-29 (FIAI…SFII), 47-67 (FFTI…SIWL), 87-107 (LMIA…SSKY), 146-166 (VLIL…YFII), 195-215 (GKQL…GYII), 242-262 (IYRI…ISII), and 266-286 (IKPI…EGAT).

It belongs to the UPF0182 family.

It is found in the cell membrane. The protein is UPF0182 protein CTC_00086 of Clostridium tetani (strain Massachusetts / E88).